A 198-amino-acid chain; its full sequence is Sporulation-specific protein 16 (198 aa).

Necessary for efficient spore formation. This Saccharomyces cerevisiae (strain ATCC 204508 / S288c) (Baker's yeast) protein is Sporulation-specific protein 16 (SPO16).